The chain runs to 373 residues: Chaperone protein DnaJ (373 aa).

The J domain maps to 5–70 (DYYEVLGLQK…EKKSNYDQFG (66 aa)). The CR-type zinc-finger motif lies at 132 to 214 (GVEKEITVNR…CRGNGNVRKT (83 aa)). Zn(2+) contacts are provided by C145, C148, C162, C165, C188, C191, C202, and C205. CXXCXGXG motif repeat units follow at residues 145–152 (CEHCNGSG), 162–169 (CPTCSGTG), 188–195 (CDRCSGTG), and 202–209 (CTHCRGNG).

This sequence belongs to the DnaJ family. Homodimer. The cofactor is Zn(2+).

Its subcellular location is the cytoplasm. In terms of biological role, participates actively in the response to hyperosmotic and heat shock by preventing the aggregation of stress-denatured proteins and by disaggregating proteins, also in an autonomous, DnaK-independent fashion. Unfolded proteins bind initially to DnaJ; upon interaction with the DnaJ-bound protein, DnaK hydrolyzes its bound ATP, resulting in the formation of a stable complex. GrpE releases ADP from DnaK; ATP binding to DnaK triggers the release of the substrate protein, thus completing the reaction cycle. Several rounds of ATP-dependent interactions between DnaJ, DnaK and GrpE are required for fully efficient folding. Also involved, together with DnaK and GrpE, in the DNA replication of plasmids through activation of initiation proteins. The protein is Chaperone protein DnaJ of Clostridium botulinum (strain Alaska E43 / Type E3).